We begin with the raw amino-acid sequence, 100 residues long: Cell division topological specificity factor (100 aa).

This sequence belongs to the MinE family.

Prevents the cell division inhibition by proteins MinC and MinD at internal division sites while permitting inhibition at polar sites. This ensures cell division at the proper site by restricting the formation of a division septum at the midpoint of the long axis of the cell. The protein is Cell division topological specificity factor of Blochmanniella floridana.